The chain runs to 262 residues: 3-methyl-2-oxobutanoate hydroxymethyltransferase (262 aa).

The Mg(2+) site is built by Asp42 and Asp81. 3-methyl-2-oxobutanoate-binding positions include 42–43, Asp81, and Lys110; that span reads DS. Glu112 serves as a coordination point for Mg(2+). The Proton acceptor role is filled by Glu180.

This sequence belongs to the PanB family. As to quaternary structure, homodecamer; pentamer of dimers. Mg(2+) serves as cofactor.

Its subcellular location is the cytoplasm. The enzyme catalyses 3-methyl-2-oxobutanoate + (6R)-5,10-methylene-5,6,7,8-tetrahydrofolate + H2O = 2-dehydropantoate + (6S)-5,6,7,8-tetrahydrofolate. Its pathway is cofactor biosynthesis; (R)-pantothenate biosynthesis; (R)-pantoate from 3-methyl-2-oxobutanoate: step 1/2. In terms of biological role, catalyzes the reversible reaction in which hydroxymethyl group from 5,10-methylenetetrahydrofolate is transferred onto alpha-ketoisovalerate to form ketopantoate. The polypeptide is 3-methyl-2-oxobutanoate hydroxymethyltransferase (Legionella pneumophila (strain Lens)).